Here is a 178-residue protein sequence, read N- to C-terminus: N-alpha-acetyltransferase 20 (178 aa).

The N-acetyltransferase domain maps to 2-157; that stretch reads TTLRAFTCDD…DAYDMRKALS (156 aa).

It belongs to the acetyltransferase family. ARD1 subfamily. Component of the N-terminal acetyltransferase B (NatB) complex which is composed of NAA20 and NAA25.

The protein localises to the cytoplasm. The protein resides in the nucleus. It catalyses the reaction N-terminal L-methionyl-L-asparaginyl-[protein] + acetyl-CoA = N-terminal N(alpha)-acetyl-L-methionyl-L-asparaginyl-[protein] + CoA + H(+). It carries out the reaction N-terminal L-methionyl-L-glutaminyl-[protein] + acetyl-CoA = N-terminal N(alpha)-acetyl-L-methionyl-L-glutaminyl-[protein] + CoA + H(+). The catalysed reaction is N-terminal L-methionyl-L-aspartyl-[protein] + acetyl-CoA = N-terminal N(alpha)-acetyl-L-methionyl-L-aspartyl-[protein] + CoA + H(+). The enzyme catalyses N-terminal L-methionyl-L-glutamyl-[protein] + acetyl-CoA = N-terminal N(alpha)-acetyl-L-methionyl-L-glutamyl-[protein] + CoA + H(+). In terms of biological role, catalytic subunit of the NatB complex which catalyzes acetylation of the N-terminal methionine residues of peptides beginning with Met-Asp, Met-Glu, Met-Asn and Met-Gln. Proteins with cell cycle functions are overrepresented in the pool of NatB substrates. Required for maintaining the structure and function of actomyosin fibers and for proper cellular migration. The protein is N-alpha-acetyltransferase 20 (NAA20) of Homo sapiens (Human).